The primary structure comprises 385 residues: Carbamoyl phosphate synthase small chain (385 aa).

A CPSase region spans residues 1-185 (MSEPAILVLA…LGKGFIEQTQ (185 aa)). Residues Ser-47, Gly-237, and Gly-239 each contribute to the L-glutamine site. Residues 189–376 (NVVAYDFGVK…INEMRKANLS (188 aa)) enclose the Glutamine amidotransferase type-1 domain. Cys-265 (nucleophile) is an active-site residue. Leu-266, Gln-269, Asn-307, Gly-309, and Phe-310 together coordinate L-glutamine. Active-site residues include His-349 and Glu-351.

It belongs to the CarA family. Composed of two chains; the small (or glutamine) chain promotes the hydrolysis of glutamine to ammonia, which is used by the large (or ammonia) chain to synthesize carbamoyl phosphate. Tetramer of heterodimers (alpha,beta)4.

It carries out the reaction hydrogencarbonate + L-glutamine + 2 ATP + H2O = carbamoyl phosphate + L-glutamate + 2 ADP + phosphate + 2 H(+). The catalysed reaction is L-glutamine + H2O = L-glutamate + NH4(+). Its pathway is amino-acid biosynthesis; L-arginine biosynthesis; carbamoyl phosphate from bicarbonate: step 1/1. It participates in pyrimidine metabolism; UMP biosynthesis via de novo pathway; (S)-dihydroorotate from bicarbonate: step 1/3. Functionally, small subunit of the glutamine-dependent carbamoyl phosphate synthetase (CPSase). CPSase catalyzes the formation of carbamoyl phosphate from the ammonia moiety of glutamine, carbonate, and phosphate donated by ATP, constituting the first step of 2 biosynthetic pathways, one leading to arginine and/or urea and the other to pyrimidine nucleotides. The small subunit (glutamine amidotransferase) binds and cleaves glutamine to supply the large subunit with the substrate ammonia. The chain is Carbamoyl phosphate synthase small chain from Pasteurella multocida (strain Pm70).